The sequence spans 454 residues: tRNA modification GTPase MnmE (454 aa).

Residues arginine 23, glutamate 80, and lysine 120 each coordinate (6S)-5-formyl-5,6,7,8-tetrahydrofolate. The region spanning glycine 216–glycine 377 is the TrmE-type G domain. K(+) is bound at residue asparagine 226. Residues asparagine 226–serine 231, threonine 245–threonine 251, aspartate 270–glycine 273, asparagine 335–aspartate 338, and serine 358–arginine 360 each bind GTP. Serine 230 contributes to the Mg(2+) binding site. 3 residues coordinate K(+): threonine 245, isoleucine 247, and threonine 250. Threonine 251 contributes to the Mg(2+) binding site. (6S)-5-formyl-5,6,7,8-tetrahydrofolate is bound at residue lysine 454.

It belongs to the TRAFAC class TrmE-Era-EngA-EngB-Septin-like GTPase superfamily. TrmE GTPase family. Homodimer. Heterotetramer of two MnmE and two MnmG subunits. Requires K(+) as cofactor.

It is found in the cytoplasm. Functionally, exhibits a very high intrinsic GTPase hydrolysis rate. Involved in the addition of a carboxymethylaminomethyl (cmnm) group at the wobble position (U34) of certain tRNAs, forming tRNA-cmnm(5)s(2)U34. The polypeptide is tRNA modification GTPase MnmE (Salmonella arizonae (strain ATCC BAA-731 / CDC346-86 / RSK2980)).